The following is a 341-amino-acid chain: Ketol-acid reductoisomerase (NADP(+)) (341 aa).

In terms of domain architecture, KARI N-terminal Rossmann spans 2–182 (AKIYYNDDAD…GGTRAGVIET (181 aa)). NADP(+)-binding positions include 25–28 (YGSQ), Ser51, Ser53, and 83–86 (DQVQ). His108 is a catalytic residue. An NADP(+)-binding site is contributed by Gly134. The KARI C-terminal knotted domain maps to 183–328 (TFTEETESDL…RKLRSLFAWE (146 aa)). Mg(2+) is bound by residues Asp191, Glu195, Glu227, and Glu231. Ser252 serves as a coordination point for substrate.

The protein belongs to the ketol-acid reductoisomerase family. Requires Mg(2+) as cofactor.

It catalyses the reaction (2R)-2,3-dihydroxy-3-methylbutanoate + NADP(+) = (2S)-2-acetolactate + NADPH + H(+). The enzyme catalyses (2R,3R)-2,3-dihydroxy-3-methylpentanoate + NADP(+) = (S)-2-ethyl-2-hydroxy-3-oxobutanoate + NADPH + H(+). The protein operates within amino-acid biosynthesis; L-isoleucine biosynthesis; L-isoleucine from 2-oxobutanoate: step 2/4. It participates in amino-acid biosynthesis; L-valine biosynthesis; L-valine from pyruvate: step 2/4. Functionally, involved in the biosynthesis of branched-chain amino acids (BCAA). Catalyzes an alkyl-migration followed by a ketol-acid reduction of (S)-2-acetolactate (S2AL) to yield (R)-2,3-dihydroxy-isovalerate. In the isomerase reaction, S2AL is rearranged via a Mg-dependent methyl migration to produce 3-hydroxy-3-methyl-2-ketobutyrate (HMKB). In the reductase reaction, this 2-ketoacid undergoes a metal-dependent reduction by NADPH to yield (R)-2,3-dihydroxy-isovalerate. This Kocuria rhizophila (strain ATCC 9341 / DSM 348 / NBRC 103217 / DC2201) protein is Ketol-acid reductoisomerase (NADP(+)).